Here is a 563-residue protein sequence, read N- to C-terminus: GTPase Obg (563 aa).

The Obg domain occupies 2 to 168 (SDFVDRVTVH…RDVILELKSI (167 aa)). The OBG-type G domain occupies 169–349 (ADVALVGFPS…LNWALADLVT (181 aa)). GTP-binding positions include 175-182 (GFPSAGKS), 200-204 (FTTLV), 221-224 (DVPG), 301-304 (NKVD), and 330-332 (STA). Serine 182 and threonine 202 together coordinate Mg(2+). The OCT domain occupies 383–469 (DEGGNALDFT…DRAVEFDWDP (87 aa)). Positions 525 to 563 (MMAERKAGHWADPSVDDDRHDETSLFGRGETADDEDVEQ) are disordered.

This sequence belongs to the TRAFAC class OBG-HflX-like GTPase superfamily. OBG GTPase family. In terms of assembly, monomer. Mg(2+) is required as a cofactor.

Its subcellular location is the cytoplasm. Functionally, an essential GTPase which binds GTP, GDP and possibly (p)ppGpp with moderate affinity, with high nucleotide exchange rates and a fairly low GTP hydrolysis rate. Plays a role in control of the cell cycle, stress response, ribosome biogenesis and in those bacteria that undergo differentiation, in morphogenesis control. In Bifidobacterium adolescentis (strain ATCC 15703 / DSM 20083 / NCTC 11814 / E194a), this protein is GTPase Obg.